A 329-amino-acid chain; its full sequence is Succinylglutamate desuccinylase (329 aa).

The Zn(2+) site is built by His53, Glu56, and His148. Glu211 is a catalytic residue.

The protein belongs to the AspA/AstE family. Succinylglutamate desuccinylase subfamily. It depends on Zn(2+) as a cofactor.

The enzyme catalyses N-succinyl-L-glutamate + H2O = L-glutamate + succinate. Its pathway is amino-acid degradation; L-arginine degradation via AST pathway; L-glutamate and succinate from L-arginine: step 5/5. Its function is as follows. Transforms N(2)-succinylglutamate into succinate and glutamate. This Erwinia tasmaniensis (strain DSM 17950 / CFBP 7177 / CIP 109463 / NCPPB 4357 / Et1/99) protein is Succinylglutamate desuccinylase.